The primary structure comprises 231 residues: Large ribosomal subunit protein uL1 (231 aa).

This sequence belongs to the universal ribosomal protein uL1 family. As to quaternary structure, part of the 50S ribosomal subunit.

Functionally, binds directly to 23S rRNA. The L1 stalk is quite mobile in the ribosome, and is involved in E site tRNA release. In terms of biological role, protein L1 is also a translational repressor protein, it controls the translation of the L11 operon by binding to its mRNA. The polypeptide is Large ribosomal subunit protein uL1 (Francisella tularensis subsp. tularensis (strain FSC 198)).